The primary structure comprises 153 residues: Large ribosomal subunit protein uL30 (153 aa).

This sequence belongs to the universal ribosomal protein uL30 family. As to quaternary structure, part of the 50S ribosomal subunit.

This chain is Large ribosomal subunit protein uL30, found in Methanocorpusculum labreanum (strain ATCC 43576 / DSM 4855 / Z).